A 120-amino-acid chain; its full sequence is Large ribosomal subunit protein bL19 (120 aa).

This sequence belongs to the bacterial ribosomal protein bL19 family.

In terms of biological role, this protein is located at the 30S-50S ribosomal subunit interface and may play a role in the structure and function of the aminoacyl-tRNA binding site. The sequence is that of Large ribosomal subunit protein bL19 from Rippkaea orientalis (strain PCC 8801 / RF-1) (Cyanothece sp. (strain PCC 8801)).